The following is a 608-amino-acid chain: Protein Spindly (608 aa).

Position 1 is an N-acetylmethionine (M1). Residues 1-445 adopt a coiled-coil conformation; that stretch reads MEADITNLRN…LKLKYEPEER (445 aa). A disordered region spans residues 465–487; the sequence is PEETEETAAASATEDGVSRLPPH. S516, S518, and S558 each carry phosphoserine.

It belongs to the Spindly family. As to quaternary structure, interacts with KNTC1 and ZW10. These interactions appear weak and may be transient or indirect. Interacts with dynein intermediate chain and dynactin (DCTN1). Interacts with the catalytically active form of USP45. Post-translationally, monoubiquitinated with'Lys-48' linkage. Deubiquitinated by USP45.

It localises to the cytoplasm. The protein localises to the cytoskeleton. Its subcellular location is the microtubule organizing center. The protein resides in the centrosome. It is found in the chromosome. It localises to the centromere. The protein localises to the kinetochore. Its subcellular location is the nucleus. The protein resides in the spindle pole. In terms of biological role, required for the localization of dynein and dynactin to the mitotic kintochore. Dynein is believed to control the initial lateral interaction between the kinetochore and spindle microtubules and to facilitate the subsequent formation of end-on kinetochore-microtubule attachments mediated by the NDC80 complex. Also required for correct spindle orientation. Does not appear to be required for the removal of spindle assembly checkpoint (SAC) proteins from the kinetochore upon bipolar spindle attachment. Acts as an adapter protein linking the dynein motor complex to various cargos and converts dynein from a non-processive to a highly processive motor in the presence of dynactin. Facilitates the interaction between dynein and dynactin and activates dynein processivity (the ability to move along a microtubule for a long distance without falling off the track). Plays a role in cell migration. The protein is Protein Spindly (Spdl1) of Mus musculus (Mouse).